Here is a 331-residue protein sequence, read N- to C-terminus: GTPase Obg (331 aa).

The Obg domain occupies 1 to 159 (MQFIDQARIA…RELQLELKLL (159 aa)). The OBG-type G domain maps to 160–328 (AEVGLVGLPN…LLQQVWQELG (169 aa)). GTP contacts are provided by residues 166-173 (GLPNAGKS), 191-195 (FTTLV), 213-216 (DIPG), 280-283 (SKSE), and 309-311 (SAV). The Mg(2+) site is built by Ser-173 and Thr-193.

Belongs to the TRAFAC class OBG-HflX-like GTPase superfamily. OBG GTPase family. In terms of assembly, monomer. Mg(2+) is required as a cofactor.

It localises to the cytoplasm. Functionally, an essential GTPase which binds GTP, GDP and possibly (p)ppGpp with moderate affinity, with high nucleotide exchange rates and a fairly low GTP hydrolysis rate. Plays a role in control of the cell cycle, stress response, ribosome biogenesis and in those bacteria that undergo differentiation, in morphogenesis control. The chain is GTPase Obg from Synechococcus sp. (strain RCC307).